The sequence spans 230 residues: Flavin-dependent thymidylate synthase (230 aa).

In terms of domain architecture, ThyX spans 1-217 (MEIKVLEKGF…PVTYEAFLNF (217 aa)). Residues serine 55, 78-80 (RHR), and glutamate 86 each bind FAD. Residues 75–78 (QLVR), 86–90 (ERSGR), and arginine 156 each bind dUMP. A ThyX motif motif is present at residues 78-88 (RHRIASINERS). FAD-binding positions include 172–174 (NAR) and asparagine 178. Arginine 183 is a dUMP binding site. Arginine 183 serves as the catalytic Involved in ionization of N3 of dUMP, leading to its activation.

It belongs to the thymidylate synthase ThyX family. Homotetramer. Requires FAD as cofactor.

It carries out the reaction dUMP + (6R)-5,10-methylene-5,6,7,8-tetrahydrofolate + NADPH + H(+) = dTMP + (6S)-5,6,7,8-tetrahydrofolate + NADP(+). Its pathway is pyrimidine metabolism; dTTP biosynthesis. Catalyzes the reductive methylation of 2'-deoxyuridine-5'-monophosphate (dUMP) to 2'-deoxythymidine-5'-monophosphate (dTMP) while utilizing 5,10-methylenetetrahydrofolate (mTHF) as the methyl donor, and NADPH and FADH(2) as the reductant. The protein is Flavin-dependent thymidylate synthase of Kosmotoga olearia (strain ATCC BAA-1733 / DSM 21960 / TBF 19.5.1).